The sequence spans 222 residues: Endonuclease V (222 aa).

The Mg(2+) site is built by Asp-34 and Asp-102.

It belongs to the endonuclease V family. The cofactor is Mg(2+).

The protein localises to the cytoplasm. It carries out the reaction Endonucleolytic cleavage at apurinic or apyrimidinic sites to products with a 5'-phosphate.. In terms of biological role, DNA repair enzyme involved in the repair of deaminated bases. Selectively cleaves double-stranded DNA at the second phosphodiester bond 3' to a deoxyinosine leaving behind the intact lesion on the nicked DNA. This chain is Endonuclease V, found in Photorhabdus laumondii subsp. laumondii (strain DSM 15139 / CIP 105565 / TT01) (Photorhabdus luminescens subsp. laumondii).